Here is a 339-residue protein sequence, read N- to C-terminus: Glycerol-3-phosphate dehydrogenase [NAD(P)+] (339 aa).

The NADPH site is built by serine 15, tyrosine 16, histidine 36, and lysine 110. Residues lysine 110, glycine 139, and threonine 141 each contribute to the sn-glycerol 3-phosphate site. Residue alanine 143 coordinates NADPH. Residues lysine 195, aspartate 248, serine 258, arginine 259, and asparagine 260 each coordinate sn-glycerol 3-phosphate. The active-site Proton acceptor is lysine 195. Arginine 259 contacts NADPH. Positions 283 and 285 each coordinate NADPH.

The protein belongs to the NAD-dependent glycerol-3-phosphate dehydrogenase family.

It is found in the cytoplasm. It carries out the reaction sn-glycerol 3-phosphate + NAD(+) = dihydroxyacetone phosphate + NADH + H(+). The catalysed reaction is sn-glycerol 3-phosphate + NADP(+) = dihydroxyacetone phosphate + NADPH + H(+). The protein operates within membrane lipid metabolism; glycerophospholipid metabolism. In terms of biological role, catalyzes the reduction of the glycolytic intermediate dihydroxyacetone phosphate (DHAP) to sn-glycerol 3-phosphate (G3P), the key precursor for phospholipid synthesis. The protein is Glycerol-3-phosphate dehydrogenase [NAD(P)+] of Shigella boydii serotype 18 (strain CDC 3083-94 / BS512).